The sequence spans 328 residues: Putative tyrosine-protein kinase C03B1.5 (328 aa).

The region spanning 25-288 (WSPALKIGSG…ALHASSQTYL (264 aa)) is the Protein kinase domain. Residues 31–39 (IGSGAFGEV) and Lys-62 each bind ATP. Asp-155 serves as the catalytic Proton acceptor.

It belongs to the protein kinase superfamily. Tyr protein kinase family.

The enzyme catalyses L-tyrosyl-[protein] + ATP = O-phospho-L-tyrosyl-[protein] + ADP + H(+). The chain is Putative tyrosine-protein kinase C03B1.5 from Caenorhabditis elegans.